The chain runs to 732 residues: Small conductance calcium-activated potassium channel protein 3 (732 aa).

Basic and acidic residues predominate over residues 1-11 (MDTSGHFHDSG). 2 disordered regions span residues 1–82 (MDTS…QQAP) and 119–161 (AILH…QASP). The span at 35 to 61 (QPPPPPAPPAVPQQPPGPLLQPQPPQP) shows a compositional bias: pro residues. The span at 62 to 82 (QQQQSQQQQQQQSQQQQQQAP) shows a compositional bias: low complexity. A compositionally biased stretch (polar residues) spans 119-133 (AILHPSSRQGSQLNL). Low complexity predominate over residues 139 to 148 (GHSPSSTATS). The residue at position 168 (serine 168) is a Phosphoserine. Polar residues predominate over residues 241–257 (THNHQHAGTTAGSTTFP). The disordered stretch occupies residues 241 to 260 (THNHQHAGTTAGSTTFPKAN). Residues 289–309 (LIFGMFGIVVMVIETELSWGL) form a helical membrane-spanning segment. A helical transmembrane segment spans residues 316–336 (FSLALKCLISLSTVILLGLII). The helical transmembrane segment at 367 to 387 (ISLEMLVCAIHPIPGEYKFFW) threads the bilayer. A helical membrane pass occupies residues 406-426 (IILSIPMFLRLYLIARVMLLH). Residues 455-475 (LMTICPGTVLLVFSISLWIIA) form a helical membrane-spanning segment. Positions 495–515 (FLGAMWLISITFLSIGYGDMV) form an intramembrane region, pore-forming. The chain crosses the membrane as a helical span at residues 524–544 (VCLLTGIMGAGCTALVVAVVA). The interval 562-638 (DTQLTKRIKN…LVDLSKMQNV (77 aa)) is calmodulin-binding. Residues 643–670 (ITELNDRSEDLEKQIGSLESKLEHLTAS) are a coiled coil. Residues 704-732 (GTSHAPPSDSPIGISSTSFPTPYTSSSSC) form a disordered region. Positions 718–732 (SSTSFPTPYTSSSSC) are enriched in low complexity.

The protein belongs to the potassium channel KCNN family. KCa2.3/KCNN3 subfamily. Homodimer. Heteromultimer with KCNN2 or KCNN1; this modulates plasma membrane expression and consequently the small conductance calcium-activated potassium channel activity. The complex is composed of 4 channel subunits each of which binds to a calmodulin subunit which regulates the channel activity through calcium-binding. Interacts with CALM1. As to expression, expressed at low levels in atrial and ventricular myocytes (at protein level).

The protein resides in the cell membrane. The protein localises to the cytoplasm. Its subcellular location is the myofibril. It localises to the sarcomere. It is found in the z line. It catalyses the reaction K(+)(in) = K(+)(out). Its activity is regulated as follows. Inhibited by bee venom neurotoxin apamin. In terms of biological role, small conductance calcium-activated potassium channel that mediates the voltage-independent transmembrane transfer of potassium across the cell membrane through a constitutive interaction with calmodulin which binds the intracellular calcium allowing its opening. The current is characterized by a voltage-independent activation, an intracellular calcium concentration increase-dependent activation and a single-channel conductance of 10 picosiemens. Also presents an inwardly rectifying current, thus reducing its already small outward conductance of potassium ions, which is particularly the case when the membrane potential displays positive values, above + 20 mV. Activation is followed by membrane hyperpolarization. Thought to regulate neuronal excitability by contributing to the slow component of synaptic afterhyperpolarization. The chain is Small conductance calcium-activated potassium channel protein 3 from Mus musculus (Mouse).